The sequence spans 157 residues: Rieske domain-containing protein (157 aa).

Methionine 1 bears the N-acetylmethionine mark. Serine 6 bears the Phosphoserine mark. Rieske domains lie at 16-94 (SSVC…TGEG) and 17-131 (SVCV…NIYV). 4 residues coordinate [2Fe-2S] cluster: cysteine 57, histidine 59, cysteine 80, and histidine 83.

Requires [2Fe-2S] cluster as cofactor.

This Homo sapiens (Human) protein is Rieske domain-containing protein (RFESD).